We begin with the raw amino-acid sequence, 102 residues long: Biotrophy-associated secreted protein 2 (102 aa).

Residues 1–19 (MVRVSTFAAILAMALSVTA) form the signal peptide. An N-linked (GlcNAc...) asparagine glycan is attached at Asn-46.

It is found in the secreted. Its function is as follows. Secreted effector involved in biotrophic colonization of plant cells. This chain is Biotrophy-associated secreted protein 2, found in Pyricularia oryzae (strain 70-15 / ATCC MYA-4617 / FGSC 8958) (Rice blast fungus).